Consider the following 153-residue polypeptide: UPF0756 membrane protein Pjdr2_2290 (153 aa).

The next 5 membrane-spanning stretches (helical) occupy residues 6–26 (LILV…IATA), 50–70 (LELG…SGKV), 75–95 (LIAA…AVAA), 111–131 (MVVG…GIPV), and 132–152 (GPLM…LMSG).

Belongs to the UPF0756 family.

It localises to the cell membrane. The protein is UPF0756 membrane protein Pjdr2_2290 of Paenibacillus sp. (strain JDR-2).